We begin with the raw amino-acid sequence, 465 residues long: E3 ubiquitin-protein ligase parkin (465 aa).

Residues 1 to 76 enclose the Ubiquitin-like domain; the sequence is MIVFVRFNSS…VHIVQRPQRK (76 aa). Position 65 is a phosphoserine; by PINK1 (Ser65). Residues 71–96 are disordered; it reads QRPQRKSHETNASGGDKPQSTPEGSI. Residues 77–237 form a necessary for PINK1-dependent localization to mitochondria region; that stretch reads SHETNASGGD…LITNNSRSIP (161 aa). Thr80 bears the Phosphothreonine mark. Residues 80–93 are compositionally biased toward polar residues; it reads TNASGGDKPQSTPE. Residues 141–225 form an RING-type 0; atypical zinc finger; sequence PTYHSFFVYC…PTSDKDTSVA (85 aa). Thr175 is modified (phosphothreonine; by PINK1). Residues 204-238 are SYT11 binding 1; it reads TRAEFFFKCGAHPTSDKDTSVALNLITNNSRSIPC. Thr217 bears the Phosphothreonine mark. The tract at residues 234-465 is TRIAD supradomain; sequence RSIPCIACTD…ACMGDHWFDV (232 aa). Residues Cys238, Cys241, Cys253, His257, Cys260, Cys263, Cys289, Cys293, Cys332, and Cys337 each contribute to the Zn(2+) site. The segment at 238–293 adopts an RING-type 1 zinc-finger fold; it reads CIACTDVRNPVLVFQCNHRHVICLDCFHLYCVTRLNDRQFVHDAQLGYSLPCVAGC. Residues 257 to 293 form an SYT11 binding 2 region; that stretch reads HVICLDCFHLYCVTRLNDRQFVHDAQLGYSLPCVAGC. The segment at 313-377 adopts an IBR-type zinc-finger fold; that stretch reads NRYQQYGAEE…CKEAYHEGEC (65 aa). Residue Lys349 forms a Glycyl lysine isopeptide (Lys-Gly) (interchain with G-Cter in ISG15) linkage. The Zn(2+) site is built by Cys352, Cys360, Cys365, and Cys368. Residue Lys369 forms a Glycyl lysine isopeptide (Lys-Gly) (interchain with G-Cter in ISG15) linkage. Zn(2+) is bound by residues His373 and Cys377. Positions 378–410 are REP; sequence DSMFEASGATSQAYRVDQRAAEQARWEEASKET. Positions 418 and 421 each coordinate Zn(2+). An RING-type 2; atypical zinc finger spans residues 418–449; that stretch reads CPRCNVPIEKNGGCMHMKCPQPQCKLEWCWNC. Cys431 is an active-site residue. Residues Cys436, Cys441, Cys446, Cys449, Cys457, and His461 each contribute to the Zn(2+) site.

The protein belongs to the RBR family. Parkin subfamily. Forms an E3 ubiquitin ligase complex with UBE2L3 or UBE2L6. Mediates 'Lys-63'-linked polyubiquitination by associating with UBE2V1. Part of a SCF-like complex, consisting of PRKN, CUL1 and FBXW7. Interacts with SNCAIP. Binds to the C2A and C2B domains of SYT11. Interacts and regulates the turnover of SEPTIN5. Part of a complex, including STUB1, HSP70 and GPR37. The amount of STUB1 in the complex increases during ER stress. STUB1 promotes the dissociation of HSP70 from PRKN and GPR37, thus facilitating PRKN-mediated GPR37 ubiquitination. HSP70 transiently associates with unfolded GPR37 and inhibits the E3 activity of PRKN, whereas, STUB1 enhances the E3 activity of PRKN through promotion of dissociation of HSP70 from PRKN-GPR37 complexes. Interacts with PSMD4 and PACRG. Interacts with LRRK2. Interacts with RANBP2. Interacts with SUMO1 but not SUMO2, which promotes nuclear localization and autoubiquitination. Interacts (via first RING-type domain) with AIMP2 (via N-terminus). Interacts with PSMA7 and RNF41. Interacts with PINK1. Forms a complex with PINK1 and PARK7. Interacts with CHPF, the interaction with isoform 2 may facilitate PRKN transport into the mitochondria. Interacts with MFN2 (phosphorylated), promotes PRKN localization in dysfunctional depolarized mitochondria. Interacts with FBXO7; this promotes translocation to dysfunctional depolarized mitochondria. Interacts with ZNF746. Interacts with heat shock protein 70 family members, including HSPA1L, HSPA1A and HSPA8; interaction HSPA1L promotes translocation to damaged mitochondria. Interacts with BAG4 and, to a lesser extent, BAG5; interaction with BAG4 inhibits translocation to damaged mitochondria. Forms a complex with PRKN and PARK7. Interacts with AMBRA1. In terms of processing, auto-ubiquitinates in an E2-dependent manner leading to its own degradation. Also polyubiquitinated by RNF41 for proteasomal degradation. Post-translationally, S-nitrosylated. Phosphorylated. Activation requires phosphorylation at Ser-65 by PINK1 and binding to PINK1 phosphorylated ubiquitin. Phosphorylation at Thr-175 by PINK1 and at Thr-217 is important for mitochondrial localization. Largely confined to neuronal elements, including fibers and neuropil. Highly expressed at the forebrain level, in pyramidal cells of layer V, in various cortical regions and cerebellum. Expressed in the nucleus of diagonal band of Broca, nucleus basalis, bed nucleus of the stria terminalis, and olfactory tubercle. Moderate expression is seen in most neurons of the subthalamic nucleus, heart, skeletal muscle and testis. Moderate expression was found in frontal cortex, parietal cortex, cerebellum, heart, skeletal muscle and testis.

It localises to the cytoplasm. The protein localises to the cytosol. The protein resides in the nucleus. Its subcellular location is the endoplasmic reticulum. It is found in the mitochondrion. It localises to the mitochondrion outer membrane. The protein localises to the cell projection. The protein resides in the neuron projection. Its subcellular location is the postsynaptic density. It is found in the presynapse. It carries out the reaction [E2 ubiquitin-conjugating enzyme]-S-ubiquitinyl-L-cysteine + [acceptor protein]-L-lysine = [E2 ubiquitin-conjugating enzyme]-L-cysteine + [acceptor protein]-N(6)-ubiquitinyl-L-lysine.. The protein operates within protein modification; protein ubiquitination. With respect to regulation, in the autoinhibited state the side chain of Phe-463 inserts into a hydrophobic groove in RING-0, occluding the ubiquitin acceptor site Cys-431, whereas the REP repressor element binds RING-1 and blocks its E2-binding site. Activation of PRKN requires 2 steps: (1) phosphorylation at Ser-65 by PINK1 and (2) binding to phosphorylated ubiquitin, leading to unlock repression of the catalytic Cys-431 by the RING-0 region via an allosteric mechanism and converting PRKN to its fully-active form. According to another report, phosphorylation at Ser-65 by PINK1 is not essential for activation and only binding to phosphorylated ubiquitin is essential to unlock repression. In addition, ISG15 conjugation positively regulates its ubiquitin E3 ligase activity by suppressing the intramolecular interaction that maintains its autoinhibited conformation. Its function is as follows. Functions within a multiprotein E3 ubiquitin ligase complex, catalyzing the covalent attachment of ubiquitin moieties onto substrate proteins. Substrates include SYT11 and VDAC1. Other substrates are BCL2, CCNE1, GPR37, RHOT1/MIRO1, MFN1, MFN2, STUB1, SNCAIP, SEPTIN5, TOMM20, USP30, ZNF746, MIRO1 and AIMP2. Mediates monoubiquitination as well as 'Lys-6', 'Lys-11', 'Lys-48'-linked and 'Lys-63'-linked polyubiquitination of substrates depending on the context. Participates in the removal and/or detoxification of abnormally folded or damaged protein by mediating 'Lys-63'-linked polyubiquitination of misfolded proteins such as PARK7: 'Lys-63'-linked polyubiquitinated misfolded proteins are then recognized by HDAC6, leading to their recruitment to aggresomes, followed by degradation. Mediates 'Lys-63'-linked polyubiquitination of a 22 kDa O-linked glycosylated isoform of SNCAIP, possibly playing a role in Lewy-body formation. Mediates monoubiquitination of BCL2, thereby acting as a positive regulator of autophagy. Protects against mitochondrial dysfunction during cellular stress, by acting downstream of PINK1 to coordinate mitochondrial quality control mechanisms that remove and replace dysfunctional mitochondrial components. Depending on the severity of mitochondrial damage and/or dysfunction, activity ranges from preventing apoptosis and stimulating mitochondrial biogenesis to regulating mitochondrial dynamics and eliminating severely damaged mitochondria via mitophagy. Activation and recruitment onto the outer membrane of damaged/dysfunctional mitochondria (OMM) requires PINK1-mediated phosphorylation of both PRKN and ubiquitin. After mitochondrial damage, functions with PINK1 to mediate the decision between mitophagy or preventing apoptosis by inducing either the poly- or monoubiquitination of VDAC1, respectively; polyubiquitination of VDAC1 promotes mitophagy, while monoubiquitination of VDAC1 decreases mitochondrial calcium influx which ultimately inhibits apoptosis. When cellular stress results in irreversible mitochondrial damage, promotes the autophagic degradation of dysfunctional depolarized mitochondria (mitophagy) by promoting the ubiquitination of mitochondrial proteins such as TOMM20, RHOT1/MIRO1, MFN1 and USP30. Preferentially assembles 'Lys-6'-, 'Lys-11'- and 'Lys-63'-linked polyubiquitin chains, leading to mitophagy. The PINK1-PRKN pathway also promotes fission of damaged mitochondria by PINK1-mediated phosphorylation which promotes the PRKN-dependent degradation of mitochondrial proteins involved in fission such as MFN2. This prevents the refusion of unhealthy mitochondria with the mitochondrial network or initiates mitochondrial fragmentation facilitating their later engulfment by autophagosomes. Regulates motility of damaged mitochondria via the ubiquitination and subsequent degradation of MIRO1 and MIRO2; in motor neurons, this likely inhibits mitochondrial intracellular anterograde transport along the axons which probably increases the chance of the mitochondria undergoing mitophagy in the soma. Involved in mitochondrial biogenesis via the 'Lys-48'-linked polyubiquitination of transcriptional repressor ZNF746/PARIS which leads to its subsequent proteasomal degradation and allows activation of the transcription factor PPARGC1A. Limits the production of reactive oxygen species (ROS). Regulates cyclin-E during neuronal apoptosis. In collaboration with CHPF isoform 2, may enhance cell viability and protect cells from oxidative stress. Independently of its ubiquitin ligase activity, protects from apoptosis by the transcriptional repression of p53/TP53. May protect neurons against alpha synuclein toxicity, proteasomal dysfunction, GPR37 accumulation, and kainate-induced excitotoxicity. May play a role in controlling neurotransmitter trafficking at the presynaptic terminal and in calcium-dependent exocytosis. May represent a tumor suppressor gene. The chain is E3 ubiquitin-protein ligase parkin from Rattus norvegicus (Rat).